Here is a 317-residue protein sequence, read N- to C-terminus: Putative peptide import ATP-binding protein BruAb2_0797 (317 aa).

Residues 7-250 form the ABC transporter domain; that stretch reads LSVRGLAKHY…PQHPYTRALL (244 aa). 43 to 50 contributes to the ATP binding site; it reads GESGSGKT.

The protein belongs to the ABC transporter superfamily. The complex is composed of two ATP-binding proteins (BruAb2_0796 and BruAb2_0797), two transmembrane proteins (BruAb2_0794) and a solute-binding protein (BruAb2_0792).

The protein localises to the cell inner membrane. In terms of biological role, probably part of an ABC transporter complex that could be involved in peptide import. Probably responsible for energy coupling to the transport system. The polypeptide is Putative peptide import ATP-binding protein BruAb2_0797 (Brucella abortus biovar 1 (strain 9-941)).